The following is a 201-amino-acid chain: FMN-dependent NADH:quinone oxidoreductase (201 aa).

Residues Ser-10, 16–18 (SQS), 96–99 (MYNF), and 140–143 (SRGG) contribute to the FMN site.

This sequence belongs to the azoreductase type 1 family. In terms of assembly, homodimer. Requires FMN as cofactor.

The enzyme catalyses 2 a quinone + NADH + H(+) = 2 a 1,4-benzosemiquinone + NAD(+). The catalysed reaction is N,N-dimethyl-1,4-phenylenediamine + anthranilate + 2 NAD(+) = 2-(4-dimethylaminophenyl)diazenylbenzoate + 2 NADH + 2 H(+). In terms of biological role, quinone reductase that provides resistance to thiol-specific stress caused by electrophilic quinones. Also exhibits azoreductase activity. Catalyzes the reductive cleavage of the azo bond in aromatic azo compounds to the corresponding amines. The polypeptide is FMN-dependent NADH:quinone oxidoreductase (Cronobacter sakazakii (strain ATCC BAA-894) (Enterobacter sakazakii)).